The chain runs to 250 residues: Peptidyl-tRNA hydrolase (250 aa).

Tyrosine 14 contacts tRNA. The active-site Proton acceptor is histidine 19. The tRNA site is built by phenylalanine 64, asparagine 66, and asparagine 112. A disordered region spans residues 192–250; it reads MGDGNQRPGGVKTDPAQLEKAPPKAQSHIRQARQNQKKPNIPESGPMAEMLKKLLGKKD. Over residues 219–229 the composition is skewed to polar residues; the sequence is HIRQARQNQKK. The span at 241-250 shows a compositional bias: basic and acidic residues; sequence MLKKLLGKKD.

It belongs to the PTH family. In terms of assembly, monomer.

It is found in the cytoplasm. The enzyme catalyses an N-acyl-L-alpha-aminoacyl-tRNA + H2O = an N-acyl-L-amino acid + a tRNA + H(+). In terms of biological role, hydrolyzes ribosome-free peptidyl-tRNAs (with 1 or more amino acids incorporated), which drop off the ribosome during protein synthesis, or as a result of ribosome stalling. Its function is as follows. Catalyzes the release of premature peptidyl moieties from peptidyl-tRNA molecules trapped in stalled 50S ribosomal subunits, and thus maintains levels of free tRNAs and 50S ribosomes. This chain is Peptidyl-tRNA hydrolase, found in Brucella canis (strain ATCC 23365 / NCTC 10854 / RM-666).